Here is a 446-residue protein sequence, read N- to C-terminus: N-succinylarginine dihydrolase (446 aa).

Residues 19-28 (AGLSFGNVAS), N110, and 137-138 (HR) contribute to the substrate site. Residue E174 is part of the active site. Position 213 (R213) interacts with substrate. The active site involves H249. Substrate is bound by residues D251 and N364. The active-site Nucleophile is C370.

The protein belongs to the succinylarginine dihydrolase family. Homodimer.

It catalyses the reaction N(2)-succinyl-L-arginine + 2 H2O + 2 H(+) = N(2)-succinyl-L-ornithine + 2 NH4(+) + CO2. It participates in amino-acid degradation; L-arginine degradation via AST pathway; L-glutamate and succinate from L-arginine: step 2/5. Functionally, catalyzes the hydrolysis of N(2)-succinylarginine into N(2)-succinylornithine, ammonia and CO(2). In Burkholderia orbicola (strain MC0-3), this protein is N-succinylarginine dihydrolase.